Here is a 1085-residue protein sequence, read N- to C-terminus: Aminopeptidase N (1085 aa).

Positions 1–30 (MKLTKGCAYKYIIFTVLILANILYDNKKRC) form a signal peptide, required for ER targeting and membrane association; not cleaved. The segment at 1-200 (MKLTKGCAYK…VKKNEPKIHY (200 aa)) is sufficient for targeting to the food vacuole. The disordered stretch occupies residues 108–130 (EKGDNNNNNHQNNNGNDNKKRLG). Over residues 112–123 (NNNNNHQNNNGN) the composition is skewed to low complexity. 4 residues coordinate a peptide: Glu319, Gly460, Ala461, and Glu463. Zn(2+) is bound at residue His496. The Proton acceptor role is filled by Glu497. The Zn(2+) site is built by His500 and Glu519.

It belongs to the peptidase M1 family. In terms of assembly, heterodimer of the p68 form and the p35 form which are derived from the p120 precursor. Requires Zn(2+) as cofactor. The full length protein appears to be cleaved into a 120 kDa precursor. This precursor is then proteolytically cleaved at the N-terminus generating a 96 kDa form which is further processed at the C-terminus into 68 kDa and 35 kDa forms that remain associated.

It localises to the parasitophorous vacuole membrane. The protein resides in the nucleus. The protein localises to the cytoplasm. Its subcellular location is the vacuole lumen. Inhibited by 1,10-phenanthroline, EDTA and bestatin. Inhibited by (Benzyl)Tyr-Ala (BTA). Activity is not affected by phosphoramidin, PMSF, leupeptin, iodoacetamide or pepstatin. Displays aminopeptidase activity with a broad substrate specificity. Preferentially, cleaves after Leu and Met, but also cleaves after Ala and Arg. Low activity towards Lys, Phe, Tyr, Trp, Gln, Ser and Gly and negligible activity towards Glu, Asp, Pro, Ile, Thr, Val, His and Asn. Has dipeptidase activity. Plays a role in the terminal stages of host hemoglobin digestion by cleaving the N-terminal residue of small hemoglobin-derived oligopeptides. The sequence is that of Aminopeptidase N from Plasmodium falciparum (isolate 3D7).